We begin with the raw amino-acid sequence, 154 residues long: 6,7-dimethyl-8-ribityllumazine synthase (154 aa).

5-amino-6-(D-ribitylamino)uracil contacts are provided by residues Phe15, 47 to 49 (TFD), and 71 to 73 (AVI). Residue 76–77 (ET) coordinates (2S)-2-hydroxy-3-oxobutyl phosphate. Residue His79 is the Proton donor of the active site. Leu104 is a binding site for 5-amino-6-(D-ribitylamino)uracil. Arg119 is a binding site for (2S)-2-hydroxy-3-oxobutyl phosphate.

The protein belongs to the DMRL synthase family.

It catalyses the reaction (2S)-2-hydroxy-3-oxobutyl phosphate + 5-amino-6-(D-ribitylamino)uracil = 6,7-dimethyl-8-(1-D-ribityl)lumazine + phosphate + 2 H2O + H(+). It participates in cofactor biosynthesis; riboflavin biosynthesis; riboflavin from 2-hydroxy-3-oxobutyl phosphate and 5-amino-6-(D-ribitylamino)uracil: step 1/2. Its function is as follows. Catalyzes the formation of 6,7-dimethyl-8-ribityllumazine by condensation of 5-amino-6-(D-ribitylamino)uracil with 3,4-dihydroxy-2-butanone 4-phosphate. This is the penultimate step in the biosynthesis of riboflavin. The chain is 6,7-dimethyl-8-ribityllumazine synthase from Saccharolobus islandicus (strain M.16.27) (Sulfolobus islandicus).